Here is a 258-residue protein sequence, read N- to C-terminus: Aspartate/glutamate leucyltransferase (258 aa).

This sequence belongs to the R-transferase family. Bpt subfamily.

Its subcellular location is the cytoplasm. The catalysed reaction is N-terminal L-glutamyl-[protein] + L-leucyl-tRNA(Leu) = N-terminal L-leucyl-L-glutamyl-[protein] + tRNA(Leu) + H(+). The enzyme catalyses N-terminal L-aspartyl-[protein] + L-leucyl-tRNA(Leu) = N-terminal L-leucyl-L-aspartyl-[protein] + tRNA(Leu) + H(+). Functions in the N-end rule pathway of protein degradation where it conjugates Leu from its aminoacyl-tRNA to the N-termini of proteins containing an N-terminal aspartate or glutamate. This is Aspartate/glutamate leucyltransferase from Rhodopseudomonas palustris (strain BisB18).